The primary structure comprises 814 residues: DNA ligase (814 aa).

Residues 46-50, 95-96, and glutamate 129 contribute to the NAD(+) site; these read DAEYD and SL. Catalysis depends on lysine 131, which acts as the N6-AMP-lysine intermediate. Residues arginine 152, glutamate 189, lysine 305, and lysine 329 each contribute to the NAD(+) site. Zn(2+) is bound by residues cysteine 434, cysteine 437, cysteine 458, and cysteine 464. The segment at 525 to 548 is disordered; the sequence is LSAQRRSEGEPAPKKPTKKKGEEE. Residues 735 to 814 form the BRCT domain; that stretch reads TSAAAFAGKT…DDWLAMLAEA (80 aa).

The protein belongs to the NAD-dependent DNA ligase family. LigA subfamily. The cofactor is Mg(2+). Mn(2+) serves as cofactor.

The catalysed reaction is NAD(+) + (deoxyribonucleotide)n-3'-hydroxyl + 5'-phospho-(deoxyribonucleotide)m = (deoxyribonucleotide)n+m + AMP + beta-nicotinamide D-nucleotide.. Its function is as follows. DNA ligase that catalyzes the formation of phosphodiester linkages between 5'-phosphoryl and 3'-hydroxyl groups in double-stranded DNA using NAD as a coenzyme and as the energy source for the reaction. It is essential for DNA replication and repair of damaged DNA. The chain is DNA ligase from Methylorubrum extorquens (strain PA1) (Methylobacterium extorquens).